Reading from the N-terminus, the 237-residue chain is MFRALTLKASARPVVAGLCSRQAPIAAVRYMSTPSPQDPKAKASSILDALPGNTALSKTGILATSAAAAVYAISNQLYVLNEETILVATFTGVVLAGIKFLAPAYNEFAENRVKQVSSILNSSRTKHVDAVKERIESVSELKNVSDTTKVLFDVSKETVKLEAEAFELKQQVDLAAEAKSVLDSWVRYEASVRQLQQQQIADSVVAKVQSELGNPKFQEKVLQQSVADVEKLLANLK.

The N-terminal 30 residues, 1–30 (MFRALTLKASARPVVAGLCSRQAPIAAVRY), are a transit peptide targeting the mitochondrion.

Belongs to the eukaryotic ATPase B chain family.

The protein resides in the mitochondrion. Its subcellular location is the mitochondrion inner membrane. Its function is as follows. Mitochondrial membrane ATP synthase (F(1)F(0) ATP synthase or Complex V) produces ATP from ADP in the presence of a proton gradient across the membrane which is generated by electron transport complexes of the respiratory chain. F-type ATPases consist of two structural domains, F(1) - containing the extramembraneous catalytic core, and F(0) - containing the membrane proton channel, linked together by a central stalk and a peripheral stalk. During catalysis, ATP synthesis in the catalytic domain of F(1) is coupled via a rotary mechanism of the central stalk subunits to proton translocation. Part of the complex F(0) domain and the peripheric stalk, which acts as a stator to hold the catalytic alpha(3)beta(3) subcomplex and subunit a/ATP6 static relative to the rotary elements. This chain is ATP synthase subunit 4, mitochondrial (ATP4), found in Kluyveromyces lactis (strain ATCC 8585 / CBS 2359 / DSM 70799 / NBRC 1267 / NRRL Y-1140 / WM37) (Yeast).